The sequence spans 205 residues: Methylthioribulose-1-phosphate dehydratase (205 aa).

The Zn(2+) site is built by H94 and H96.

It belongs to the aldolase class II family. MtnB subfamily. Zn(2+) serves as cofactor.

It carries out the reaction 5-(methylsulfanyl)-D-ribulose 1-phosphate = 5-methylsulfanyl-2,3-dioxopentyl phosphate + H2O. It participates in amino-acid biosynthesis; L-methionine biosynthesis via salvage pathway; L-methionine from S-methyl-5-thio-alpha-D-ribose 1-phosphate: step 2/6. In terms of biological role, catalyzes the dehydration of methylthioribulose-1-phosphate (MTRu-1-P) into 2,3-diketo-5-methylthiopentyl-1-phosphate (DK-MTP-1-P). This chain is Methylthioribulose-1-phosphate dehydratase, found in Pectobacterium atrosepticum (strain SCRI 1043 / ATCC BAA-672) (Erwinia carotovora subsp. atroseptica).